Here is a 362-residue protein sequence, read N- to C-terminus: Tryptophan 2,3-dioxygenase (362 aa).

Residues 40–44 (FIIVH) and Arg-111 each bind substrate. His-297 contacts heme. Thr-311 provides a ligand contact to substrate.

The protein belongs to the tryptophan 2,3-dioxygenase family. In terms of assembly, homotetramer. Heme is required as a cofactor.

The catalysed reaction is L-tryptophan + O2 = N-formyl-L-kynurenine. It functions in the pathway amino-acid degradation; L-tryptophan degradation via kynurenine pathway; L-kynurenine from L-tryptophan: step 1/2. Heme-dependent dioxygenase that catalyzes the oxidative cleavage of the L-tryptophan (L-Trp) pyrrole ring and converts L-tryptophan to N-formyl-L-kynurenine. Catalyzes the oxidative cleavage of the indole moiety. The protein is Tryptophan 2,3-dioxygenase of Alteromonas mediterranea (strain DSM 17117 / CIP 110805 / LMG 28347 / Deep ecotype).